The sequence spans 288 residues: Quinate/shikimate dehydrogenase (288 aa).

Substrate is bound by residues Lys71 and Asp107. NAD(+)-binding positions include 132–135 (AGGA), 155–158 (NRRD), Lys205, 232–235 (CVYN), and Gly255.

Belongs to the shikimate dehydrogenase family. In terms of assembly, homodimer.

The enzyme catalyses L-quinate + NAD(+) = 3-dehydroquinate + NADH + H(+). It carries out the reaction L-quinate + NADP(+) = 3-dehydroquinate + NADPH + H(+). It catalyses the reaction shikimate + NADP(+) = 3-dehydroshikimate + NADPH + H(+). The catalysed reaction is shikimate + NAD(+) = 3-dehydroshikimate + NADH + H(+). The protein operates within metabolic intermediate biosynthesis; chorismate biosynthesis; chorismate from D-erythrose 4-phosphate and phosphoenolpyruvate: step 4/7. Functionally, the actual biological function of YdiB remains unclear, nor is it known whether 3-dehydroshikimate or quinate represents the natural substrate. Catalyzes the reversible NAD-dependent reduction of both 3-dehydroshikimate (DHSA) and 3-dehydroquinate to yield shikimate (SA) and quinate, respectively. It can use both NAD or NADP for catalysis, however it has higher catalytic efficiency with NAD. This Escherichia coli O1:K1 / APEC protein is Quinate/shikimate dehydrogenase.